Consider the following 243-residue polypeptide: MYEVQLDKFQGPLELLYQLVKKNKIEISEISLARITEQYLEYIEHYRDFNLEMASEFMVIASELIELKVKSLLPDSEEDSTEEEKGKTIVQRLKDYHVFKKVTELFREYEKAAGQIYSKPVNLDKYVDNEVNYEIDIDISELVEAFKKAMSSTDGVEVFEGDRNLKKIESEEIKIQDKMDQILELFNQNPDQGLTFSQLVSGNPSKMEIVVTFLSILELTKLRKIEIKQEKLFSDINLRSKAG.

Belongs to the ScpA family. Component of a cohesin-like complex composed of ScpA, ScpB and the Smc homodimer, in which ScpA and ScpB bind to the head domain of Smc. The presence of the three proteins is required for the association of the complex with DNA.

It localises to the cytoplasm. Functionally, participates in chromosomal partition during cell division. May act via the formation of a condensin-like complex containing Smc and ScpB that pull DNA away from mid-cell into both cell halves. The chain is Segregation and condensation protein A from Halothermothrix orenii (strain H 168 / OCM 544 / DSM 9562).